The chain runs to 96 residues: Co-chaperonin GroES (96 aa).

Belongs to the GroES chaperonin family. As to quaternary structure, heptamer of 7 subunits arranged in a ring. Interacts with the chaperonin GroEL.

The protein localises to the cytoplasm. In terms of biological role, together with the chaperonin GroEL, plays an essential role in assisting protein folding. The GroEL-GroES system forms a nano-cage that allows encapsulation of the non-native substrate proteins and provides a physical environment optimized to promote and accelerate protein folding. GroES binds to the apical surface of the GroEL ring, thereby capping the opening of the GroEL channel. In Leptospira interrogans serogroup Icterohaemorrhagiae serovar copenhageni (strain Fiocruz L1-130), this protein is Co-chaperonin GroES.